We begin with the raw amino-acid sequence, 242 residues long: Probable transcriptional regulatory protein NMA1902 (242 aa).

Belongs to the TACO1 family.

It localises to the cytoplasm. This is Probable transcriptional regulatory protein NMA1902 from Neisseria meningitidis serogroup A / serotype 4A (strain DSM 15465 / Z2491).